Here is a 464-residue protein sequence, read N- to C-terminus: Soluble pyridine nucleotide transhydrogenase (464 aa).

35–44 (DNRPLVGGNC) provides a ligand contact to FAD.

This sequence belongs to the class-I pyridine nucleotide-disulfide oxidoreductase family. The cofactor is FAD.

It is found in the cytoplasm. It catalyses the reaction NAD(+) + NADPH = NADH + NADP(+). Conversion of NADPH, generated by peripheral catabolic pathways, to NADH, which can enter the respiratory chain for energy generation. The sequence is that of Soluble pyridine nucleotide transhydrogenase from Ectopseudomonas mendocina (strain ymp) (Pseudomonas mendocina).